We begin with the raw amino-acid sequence, 162 residues long: Shikimate kinase (162 aa).

An ATP-binding site is contributed by Gly11–Ser16. Ser15 serves as a coordination point for Mg(2+). Residues Asp33, Arg57, and Gly80 each coordinate substrate. Residue Arg116 coordinates ATP. Arg132 provides a ligand contact to substrate.

The protein belongs to the shikimate kinase family. As to quaternary structure, monomer. The cofactor is Mg(2+).

Its subcellular location is the cytoplasm. The catalysed reaction is shikimate + ATP = 3-phosphoshikimate + ADP + H(+). The protein operates within metabolic intermediate biosynthesis; chorismate biosynthesis; chorismate from D-erythrose 4-phosphate and phosphoenolpyruvate: step 5/7. Catalyzes the specific phosphorylation of the 3-hydroxyl group of shikimic acid using ATP as a cosubstrate. In Helicobacter acinonychis (strain Sheeba), this protein is Shikimate kinase.